Here is a 495-residue protein sequence, read N- to C-terminus: ATP synthase subunit beta, chloroplastic (495 aa).

172 to 179 (GGAGVGKT) provides a ligand contact to ATP.

The protein belongs to the ATPase alpha/beta chains family. F-type ATPases have 2 components, CF(1) - the catalytic core - and CF(0) - the membrane proton channel. CF(1) has five subunits: alpha(3), beta(3), gamma(1), delta(1), epsilon(1). CF(0) has four main subunits: a(1), b(1), b'(1) and c(9-12).

It localises to the plastid. Its subcellular location is the chloroplast thylakoid membrane. The enzyme catalyses ATP + H2O + 4 H(+)(in) = ADP + phosphate + 5 H(+)(out). Its function is as follows. Produces ATP from ADP in the presence of a proton gradient across the membrane. The catalytic sites are hosted primarily by the beta subunits. The protein is ATP synthase subunit beta, chloroplastic of Pteridium aquilinum (Bracken fern).